The chain runs to 563 residues: Arginine--tRNA ligase (563 aa).

The 'HIGH' region signature appears at 123-133 (PNIAKDMHVGH).

This sequence belongs to the class-I aminoacyl-tRNA synthetase family. As to quaternary structure, monomer.

It localises to the cytoplasm. The catalysed reaction is tRNA(Arg) + L-arginine + ATP = L-arginyl-tRNA(Arg) + AMP + diphosphate. In Chlamydia trachomatis serovar D (strain ATCC VR-885 / DSM 19411 / UW-3/Cx), this protein is Arginine--tRNA ligase (argS).